We begin with the raw amino-acid sequence, 190 residues long: dCTP deaminase, dUMP-forming (190 aa).

DCTP-binding positions include 101-106 (KSSLGR), Asp-119, 127-129 (TLE), Gln-148, Tyr-162, and Gln-174. Glu-129 serves as the catalytic Proton donor/acceptor. Positions 161–190 (PYGSSGVGSKYQGQRGPTPSRSYQNFIRST) are disordered. Over residues 171 to 190 (YQGQRGPTPSRSYQNFIRST) the composition is skewed to polar residues.

It belongs to the dCTP deaminase family. In terms of assembly, homotrimer.

The enzyme catalyses dCTP + 2 H2O = dUMP + NH4(+) + diphosphate. It functions in the pathway pyrimidine metabolism; dUMP biosynthesis; dUMP from dCTP: step 1/1. Bifunctional enzyme that catalyzes both the deamination of dCTP to dUTP and the hydrolysis of dUTP to dUMP without releasing the toxic dUTP intermediate. The protein is dCTP deaminase, dUMP-forming of Mycobacterium ulcerans (strain Agy99).